The following is a 352-amino-acid chain: Phosphoribosylformylglycinamidine cyclo-ligase (352 aa).

This sequence belongs to the AIR synthase family.

The protein localises to the cytoplasm. It carries out the reaction 2-formamido-N(1)-(5-O-phospho-beta-D-ribosyl)acetamidine + ATP = 5-amino-1-(5-phospho-beta-D-ribosyl)imidazole + ADP + phosphate + H(+). It participates in purine metabolism; IMP biosynthesis via de novo pathway; 5-amino-1-(5-phospho-D-ribosyl)imidazole from N(2)-formyl-N(1)-(5-phospho-D-ribosyl)glycinamide: step 2/2. This Pseudomonas putida (strain GB-1) protein is Phosphoribosylformylglycinamidine cyclo-ligase.